A 262-amino-acid chain; its full sequence is RNA-binding protein 7 (262 aa).

The residue at position 2 (glycine 2) is an N-acetylglycine. Positions 10–87 (RTLFVGNLET…RPIKIQFRAG (78 aa)) constitute an RRM domain. ZCCHC8 binding stretches follow at residues 25-35 (LLFELFHQAGP) and 59-76 (HEVS…IKLF). The disordered stretch occupies residues 95-121 (VSLSYPQHHVGNSSPTSTSPSRTVDNM). Phosphoserine occurs at positions 133 and 134. Arginine 149 is subject to Omega-N-methylarginine. 2 disordered regions span residues 159–212 (SPHL…HYSR) and 242–262 (SHDY…SSRH). Positions 165-194 (SGFSPSAQSHNHTFNQSSSSQWRQDTPSSQ) are enriched in polar residues. The residue at position 201 (serine 201) is a Phosphoserine. Residues 242-253 (SHDYDNRRDSGR) show a composition bias toward basic and acidic residues.

Component of the nuclear exosome targeting (NEXT) complex composed of MTREX, ZCCHC8, and RBM7 that directs a subset of non-coding short-lived RNAs for exosomal degradation. Interacts with ZCCHC8 and SF3B2/SAP145. Binds to MTREX through ZCCHC8. Interacts with YWHAE and YWHAZ; these interactions are stress-dependent and RBM7 phosphorylation dependent; release RNA from the NEXT complex and may affect RNA targeting to the nuclear RNA exosomome for degradation. Interacts with MEPCE and LARP7, the core subunits of 7SK snRNP; upon genotoxic stress this interaction is enhanced, triggering the release of inactive P-TEFb complex from the core and P-TEFb complex activation. Phosphorylated at Ser-133 by MAPK14/p38-alpha-activated MAPKAPK2/MK2; this phosphorylation is stress-dependent; this phosphorylation decreases its RNA-binding capacity therefore affecting RNA nuclear exosome-mediated degradation. This phosphorylation mediates YWHAE and YWHAZ interactions.

It localises to the nucleus. Its subcellular location is the nucleoplasm. Functionally, RNA-binding subunit of the trimeric nuclear exosome targeting (NEXT) complex, a complex that functions as an RNA exosome cofactor that directs a subset of non-coding short-lived RNAs for exosomal degradation. NEXT is involved in surveillance and turnover of aberrant transcripts and non-coding RNAs. Binds preferentially polyuridine sequences and associates with newly synthesized RNAs, including pre-mRNAs and short-lived exosome substrates such as promoter upstream transcripts (PROMPTs), enhancer RNAs (eRNAs), and 3'-extended products from small nuclear RNAs (snRNAs). Participates in several biological processes including DNA damage response (DDR) and stress response. During stress response, activation of the p38MAPK-MK2 pathway decreases RBM7-RNA-binding and subsequently the RNA exosome degradation activities, thereby modulating the turnover of non-coding transcriptome. Participates in DNA damage response (DDR), through its interaction with MEPCE and LARP7, the core subunits of 7SK snRNP complex, that release the positive transcription elongation factor b (P-TEFb) complex from the 7SK snRNP. In turn, activation of P-TEFb complex induces the transcription of P-TEFb-dependent DDR genes to promote cell viability. The protein is RNA-binding protein 7 of Bos taurus (Bovine).